Reading from the N-terminus, the 314-residue chain is Homoserine O-acetyltransferase (314 aa).

The active-site Acyl-thioester intermediate is the Cys142. Substrate-binding residues include Lys163 and Ser192. The Proton acceptor role is filled by His235. Glu237 is an active-site residue. Residue Arg249 participates in substrate binding.

Belongs to the MetA family.

It localises to the cytoplasm. The catalysed reaction is L-homoserine + acetyl-CoA = O-acetyl-L-homoserine + CoA. It functions in the pathway amino-acid biosynthesis; L-methionine biosynthesis via de novo pathway; O-acetyl-L-homoserine from L-homoserine: step 1/1. In terms of biological role, transfers an acetyl group from acetyl-CoA to L-homoserine, forming acetyl-L-homoserine. The chain is Homoserine O-acetyltransferase from Streptococcus pneumoniae (strain JJA).